Consider the following 101-residue polypeptide: Small ribosomal subunit protein uS14 (101 aa).

It belongs to the universal ribosomal protein uS14 family. As to quaternary structure, part of the 30S ribosomal subunit. Contacts proteins S3 and S10.

Binds 16S rRNA, required for the assembly of 30S particles and may also be responsible for determining the conformation of the 16S rRNA at the A site. The polypeptide is Small ribosomal subunit protein uS14 (Synechococcus sp. (strain JA-2-3B'a(2-13)) (Cyanobacteria bacterium Yellowstone B-Prime)).